Consider the following 97-residue polypeptide: Putative membrane protein insertion efficiency factor (97 aa).

A disordered region spans residues 68–97 (VPGTELNTAPRSGQACNPTESTHSTTQTRH). Over residues 72–97 (ELNTAPRSGQACNPTESTHSTTQTRH) the composition is skewed to polar residues.

The protein belongs to the UPF0161 family.

The protein resides in the cell inner membrane. Functionally, could be involved in insertion of integral membrane proteins into the membrane. This is Putative membrane protein insertion efficiency factor from Marinobacter nauticus (strain ATCC 700491 / DSM 11845 / VT8) (Marinobacter aquaeolei).